Here is a 308-residue protein sequence, read N- to C-terminus: Acetaldehyde dehydrogenase (308 aa).

Residue threonine 14 to isoleucine 17 participates in NAD(+) binding. Cysteine 129 serves as the catalytic Acyl-thioester intermediate. NAD(+)-binding positions include serine 160–asparagine 168 and asparagine 280.

The protein belongs to the acetaldehyde dehydrogenase family.

The enzyme catalyses acetaldehyde + NAD(+) + CoA = acetyl-CoA + NADH + H(+). The polypeptide is Acetaldehyde dehydrogenase (Thermomicrobium roseum (strain ATCC 27502 / DSM 5159 / P-2)).